We begin with the raw amino-acid sequence, 96 residues long: Co-chaperonin GroES (96 aa).

It belongs to the GroES chaperonin family. As to quaternary structure, heptamer of 7 subunits arranged in a ring. Interacts with the chaperonin GroEL.

The protein localises to the cytoplasm. Its function is as follows. Together with the chaperonin GroEL, plays an essential role in assisting protein folding. The GroEL-GroES system forms a nano-cage that allows encapsulation of the non-native substrate proteins and provides a physical environment optimized to promote and accelerate protein folding. GroES binds to the apical surface of the GroEL ring, thereby capping the opening of the GroEL channel. The protein is Co-chaperonin GroES of Neisseria gonorrhoeae (strain ATCC 700825 / FA 1090).